Here is a 212-residue protein sequence, read N- to C-terminus: Peptide methionine sulfoxide reductase MsrA (212 aa).

The active site involves cysteine 52.

The protein belongs to the MsrA Met sulfoxide reductase family.

It carries out the reaction L-methionyl-[protein] + [thioredoxin]-disulfide + H2O = L-methionyl-(S)-S-oxide-[protein] + [thioredoxin]-dithiol. The catalysed reaction is [thioredoxin]-disulfide + L-methionine + H2O = L-methionine (S)-S-oxide + [thioredoxin]-dithiol. In terms of biological role, has an important function as a repair enzyme for proteins that have been inactivated by oxidation. Catalyzes the reversible oxidation-reduction of methionine sulfoxide in proteins to methionine. This is Peptide methionine sulfoxide reductase MsrA from Salmonella choleraesuis (strain SC-B67).